The primary structure comprises 74 residues: Small ribosomal subunit protein bS20c (74 aa).

Belongs to the bacterial ribosomal protein bS20 family.

The protein resides in the plastid. It is found in the chloroplast. Binds directly to 16S ribosomal RNA. The sequence is that of Small ribosomal subunit protein bS20c from Cyanidioschyzon merolae (strain NIES-3377 / 10D) (Unicellular red alga).